The chain runs to 53 residues: Kunitz-type trypsin inhibitor alpha chain (53 aa).

A disordered region spans residues 33-53 (GWGLPRRTGDESCPLNVKAVR).

It belongs to the protease inhibitor I3 (leguminous Kunitz-type inhibitor) family. Heterodimer of an alpha and a beta chain linked by a disulfide bond.

Functionally, inhibits trypsin with a Ki of 0.25 uM. Inhibits the trypsin-like proteases in midguts of larval H.armigera, S.exigua, and P.rapae. In Albizia kalkora (Kalkora mimosa), this protein is Kunitz-type trypsin inhibitor alpha chain.